Here is a 1056-residue protein sequence, read N- to C-terminus: PAX-interacting protein 1 (1056 aa).

2 BRCT domains span residues 8 to 93 and 94 to 183; these read VPEE…GFSP and ESCQ…FYHP. The interval 94-183 is interaction with PAGR1; it reads ESCQIFFGLT…RRKDEAFYHP (90 aa). Positions 188–205 are enriched in acidic residues; it reads YEEEEEEEEEGDNEEQDS. Disordered regions lie at residues 188–276, 393–412, and 419–486; these read YEEE…QRRL, THVL…HPAL, and MQLQ…FQQQ. The segment covering 214–223 has biased composition (low complexity); the sequence is SSVASSAVAS. Residues Ser223 and Ser230 each carry the phosphoserine modification. 3 stretches are compositionally biased toward low complexity: residues 396-412, 419-435, and 445-486; these read LQQH…HPAL, MQLQ…QQQP, and QFPQ…FQQQ. Residues 577–1056 are interaction with TP53BP1; sequence QLFGHDPAVE…TLDYESYKFN (480 aa). 4 BRCT domains span residues 588–681, 688–776, 853–934, and 955–989; these read PEES…RALH, PGGK…VQYS, TPLV…NYIL, and HVSP…GGKV. The short motif at 655 to 672 is the Nuclear localization signal element; that stretch reads RKRCVTAHWLNTVLKKKK.

Interacts with the C-terminal transactivation domain of PAX2. Forms a constitutive complex with PAGR1 independently of the MLL2/MLL3 complex. Interacts with TP53BP1 (when phosphorylated at the N-terminus by ATM). Interacts with HLTF. Component of the KMT2 family MLL2/MLL3 complex (also named ASCOM complex), at least composed of the HMTs KMT2D and/or KMT2C, the common subunits ASH2L, RBBP5, WDR5 and DPY30, and the complex type-specific subunits PAXIP1/PTIP, PAGR1, NCOA6 and KDM6A; required for the association of PAGR1 with the MLL2/MLL3 complex. Interacts with NUPR1; this interaction prevents PAXIP1 inhibition of PAX2 transcription factor activity. In terms of tissue distribution, expression detected in all tissues examined, including brain stem, cerebellum, cortex, heart, spleen, kidney, liver, thymus and lung.

The protein resides in the nucleus matrix. The protein localises to the chromosome. Functionally, involved in DNA damage response and in transcriptional regulation through histone methyltransferase (HMT) complexes such as the MLL2/MLL3 complex. Plays a role in early development. In DNA damage response is required for cell survival after ionizing radiation. In vitro shown to be involved in the homologous recombination mechanism for the repair of double-strand breaks (DSBs). Its localization to DNA damage foci requires Rnf8 and Ube2n. Recruits Tp53bp1 to DNA damage foci and, at least in particular repair processes, effective DNA damage response appears to require the association with Tp53bp1 phosphorylated by Atm. Together with Tp53bp1 regulates Atm association. Proposed to recruit Pagr1 to sites of DNA damage and the Pagr1:Paxip1 complex is required for cell survival in response to DNA damage independently of the MLL2/MLL3 complex. However, this function has been questioned. Promotes ubiquitination of PCNA following UV irradiation and may regulate recruitment of polymerase eta and Rad51 to chromatin after DNA damage. Proposed to be involved in transcriptional regulation by linking MLL-containing histone methyltransferase (HMT) complexes to gene promoters by interacting with promoter-bound transcription factors such as Pax2. Associates with gene promoters that are known to be regulated by Kmt2d/Mll2. During immunoglobulin class switching in activated B-cells is involved in trimethylation of histone H3 at 'Lys-4' and in transcription initiation of downstream switch regions at the immunoglobulin heavy-chain (Igh) locus; this function appears to involve the recruitment of MLL-containing HMT complexes. Conflictingly, its function in transcriptional regulation during immunoglobulin class switching is reported to be independent of the MLL2/MLL3 complex. The polypeptide is PAX-interacting protein 1 (Paxip1) (Mus musculus (Mouse)).